The primary structure comprises 625 residues: DNA mismatch repair protein MutL (625 aa).

Belongs to the DNA mismatch repair MutL/HexB family.

Its function is as follows. This protein is involved in the repair of mismatches in DNA. It is required for dam-dependent methyl-directed DNA mismatch repair. May act as a 'molecular matchmaker', a protein that promotes the formation of a stable complex between two or more DNA-binding proteins in an ATP-dependent manner without itself being part of a final effector complex. In Azorhizobium caulinodans (strain ATCC 43989 / DSM 5975 / JCM 20966 / LMG 6465 / NBRC 14845 / NCIMB 13405 / ORS 571), this protein is DNA mismatch repair protein MutL.